The following is a 433-amino-acid chain: uncharacterized protein (433 aa).

The TRAM domain occupies 1–59 (MGEEYEVEIGPVAHGGHCIARTSEGQVLFVRHALPGERVLARVTEGEEGARYLRADAVE). Cys-72, Cys-80, Cys-83, and Cys-168 together coordinate [4Fe-4S] cluster. 4 residues coordinate S-adenosyl-L-methionine: Gln-262, Tyr-291, Glu-315, and Asp-359. Cys-386 functions as the Nucleophile in the catalytic mechanism.

Belongs to the class I-like SAM-binding methyltransferase superfamily. RNA M5U methyltransferase family.

This is an uncharacterized protein from Streptomyces avermitilis (strain ATCC 31267 / DSM 46492 / JCM 5070 / NBRC 14893 / NCIMB 12804 / NRRL 8165 / MA-4680).